Consider the following 541-residue polypeptide: Imidazole glycerol phosphate synthase hisHF (541 aa).

A Glutamine amidotransferase type-1 domain is found at 2-214 (IVSIVDYGSG…LTGNYEQPIS (213 aa)). Catalysis depends on for GATase activity residues C80, H189, and E191. Positions 228–541 (LTKRIIACLD…LAIHDVLVRT (314 aa)) are cyclase. Residues D237 and D396 contribute to the active site.

It in the C-terminal section; belongs to the HisA/HisF family.

It carries out the reaction 5-[(5-phospho-1-deoxy-D-ribulos-1-ylimino)methylamino]-1-(5-phospho-beta-D-ribosyl)imidazole-4-carboxamide + L-glutamine = D-erythro-1-(imidazol-4-yl)glycerol 3-phosphate + 5-amino-1-(5-phospho-beta-D-ribosyl)imidazole-4-carboxamide + L-glutamate + H(+). The enzyme catalyses L-glutamine + H2O = L-glutamate + NH4(+). It functions in the pathway amino-acid biosynthesis; L-histidine biosynthesis; L-histidine from 5-phospho-alpha-D-ribose 1-diphosphate: step 5/9. In terms of biological role, IGPS catalyzes the conversion of PRFAR and glutamine to IGP, AICAR and glutamate. The glutaminase domain produces the ammonia necessary for the cyclase domain to produce IGP and AICAR from PRFAR. The ammonia is channeled to the active site of the cyclase domain. In Schizosaccharomyces pombe (strain 972 / ATCC 24843) (Fission yeast), this protein is Imidazole glycerol phosphate synthase hisHF (his4).